We begin with the raw amino-acid sequence, 438 residues long: tRNA-dihydrouridine(16/17) synthase [NAD(P)(+)]-like (438 aa).

FMN contacts are provided by residues 23–25 and Gln79; that span reads PMV. The active-site Proton donor is Cys108. FMN-binding positions include Lys147, His175, 208 to 210, and 232 to 233; these read NGN and AE. Residues 343–387 are disordered; that stretch reads GPKEGSKENSSGRSKRALEEEEGSMEGLSKNKLKKQLRNPHKTFD. Basic residues predominate over residues 373-383; it reads NKLKKQLRNPH.

This sequence belongs to the Dus family. Dus1 subfamily. The cofactor is FMN.

It localises to the cytoplasm. The protein localises to the nucleus. The enzyme catalyses 5,6-dihydrouridine(16) in tRNA + NADP(+) = uridine(16) in tRNA + NADPH + H(+). It catalyses the reaction 5,6-dihydrouridine(16) in tRNA + NAD(+) = uridine(16) in tRNA + NADH + H(+). The catalysed reaction is 5,6-dihydrouridine(17) in tRNA + NAD(+) = uridine(17) in tRNA + NADH + H(+). It carries out the reaction 5,6-dihydrouridine(17) in tRNA + NADP(+) = uridine(17) in tRNA + NADPH + H(+). Its function is as follows. Catalyzes the synthesis of dihydrouridine, a modified base found in the D-loop of most tRNAs. Specifically modifies U16 and U17 in cytoplasmic tRNAs. Affects the level of some mature tRNA and thereby the total cellular translation. This is tRNA-dihydrouridine(16/17) synthase [NAD(P)(+)]-like (Dus1l) from Rattus norvegicus (Rat).